Consider the following 215-residue polypeptide: Cytochrome b6 (215 aa).

Residues 32-52 form a helical membrane-spanning segment; that stretch reads IFHCLGGITLTCFLVQVATGF. Residue Cys-35 coordinates heme c. Positions 86 and 100 each coordinate heme b. 3 helical membrane-spanning segments follow: residues 90 to 110, 116 to 136, and 186 to 206; these read ASMM…TGGF, LTWV…VTGY, and LHTF…FSMI. Heme b-binding residues include His-187 and His-202.

It belongs to the cytochrome b family. PetB subfamily. As to quaternary structure, the 4 large subunits of the cytochrome b6-f complex are cytochrome b6, subunit IV (17 kDa polypeptide, PetD), cytochrome f and the Rieske protein, while the 4 small subunits are PetG, PetL, PetM and PetN. The complex functions as a dimer. It depends on heme b as a cofactor. Requires heme c as cofactor.

The protein localises to the plastid. The protein resides in the chloroplast thylakoid membrane. In terms of biological role, component of the cytochrome b6-f complex, which mediates electron transfer between photosystem II (PSII) and photosystem I (PSI), cyclic electron flow around PSI, and state transitions. This is Cytochrome b6 from Nymphaea alba (White water-lily).